An 858-amino-acid chain; its full sequence is Protein VACUOLELESS1 (858 aa).

It belongs to the VPS16 family. As to quaternary structure, core component of at least two putative endosomal tethering complexes, the homotypic fusion and vacuole protein sorting (HOPS) complex and the class C core vacuole/endosome tethering (CORVET) complex. Their common core is composed of the class C Vps proteins VPS11, VCL1, VPS18 and VPS33, which in HOPS further associates with VPS39 and VPS41 and in CORVET with VPS3. Expressed in roots, leaves, stems, siliques, flowers and mature pollen.

The protein localises to the vacuole membrane. The protein resides in the prevacuolar compartment membrane. In terms of biological role, required for vacuole biogenesis and vacuole enlargment in dividing and expanding cells. Involved in the docking or fusion of prevacuolar vesicles. Important for the function of both male and female gametophytes, but is not essential for the germination and development of pollen. The sequence is that of Protein VACUOLELESS1 (VCL1) from Arabidopsis thaliana (Mouse-ear cress).